Consider the following 480-residue polypeptide: Salicylate hydroxylase asL1 (480 aa).

The helical transmembrane segment at 17–37 threads the bilayer; it reads PMEIAIVGGGIVGVILAIGLT. FAD is bound by residues Glu-47 and Ala-60. Asn-87 carries N-linked (GlcNAc...) asparagine glycosylation. Arg-131 is a binding site for FAD. Asn-168 is a glycosylation site (N-linked (GlcNAc...) asparagine). Catalysis depends on residues Arg-213 and Tyr-246. N-linked (GlcNAc...) asparagine glycosylation is present at Asn-250. 2 residues coordinate FAD: Asp-329 and Ala-342. Residues Asn-400 and Asn-464 are each glycosylated (N-linked (GlcNAc...) asparagine).

The protein belongs to the paxM FAD-dependent monooxygenase family. FAD serves as cofactor.

Its subcellular location is the membrane. Its pathway is secondary metabolite biosynthesis; terpenoid biosynthesis. Salicylate hydroxylase; part of the gene cluster that mediates the biosynthesis of xenovulene A, an unusual meroterpenoid that has potent inhibitory effects on the human gamma-aminobutyrate A (GABAA) benzodiazepine receptor. The first step of xenovulene A biosynthesis is the biosynthesis of 3-methylorcinaldehyde performed by the non-reducing polyketide synthase aspks1. The salicylate hydroxylase asL1 then catalyzes the oxidative dearomatization of 3-methylorcinaldehyde to yield a dearomatized hydroxycyclohexadione. The 2-oxoglutarate-dependent dioxygenase asL3 further catalyzes the oxidative ring expansion to provide the first tropolone metabolite. The cytochrome P450 monooxygenase asR2 allows the synthesis of tropolone hemiacetal. In parallel, a previously unrecognised class of terpene cyclase, asR6, produces alpha-humulene from farnesylpyrophosphate (FPP). The putative Diels-Alderase asR5 probably catalyzes the formation of the tropolone-humulene skeleton by linking humulene and the polyketide moiety. Oxidative-ring contractions catalyzed by asL4 and asL6 then processively remove carbon atoms from the polyketide to yield xenovulene A. The protein is Salicylate hydroxylase asL1 of Sarocladium schorii (Acremonium strictum (strain IMI 501407)).